Here is a 356-residue protein sequence, read N- to C-terminus: Alpha-N-acetylneuraminide alpha-2,8-sialyltransferase (356 aa).

Residues 1–29 (MSPCGRARRHTSRGAMAVLAWKFPRTRLP) are Cytoplasmic-facing. Residues 30 to 48 (VGASALCVVVLCWLYVFPV) traverse the membrane as a helical; Signal-anchor for type II membrane protein segment. At 49-356 (YRLPDEKEIV…CEDNSLQPTS (308 aa)) the chain is on the lumenal side. 2 N-linked (GlcNAc...) asparagine glycosylation sites follow: Asn71 and Asn119. An intrachain disulfide couples Cys138 to Cys287. Positions 143 and 166 each coordinate CMP-N-acetyl-beta-neuraminate. N-linked (GlcNAc...) asparagine glycosylation is found at Asn214 and Asn245. Residues Ser274, Thr275, Gly276, Trp296, and His310 each coordinate CMP-N-acetyl-beta-neuraminate.

It belongs to the glycosyltransferase 29 family.

It localises to the golgi apparatus membrane. It catalyses the reaction an N-acetyl-alpha-neuraminyl-(2-&gt;3)-beta-D-galactosyl derivative + CMP-N-acetyl-beta-neuraminate = an N-acetyl-alpha-neuraminyl-(2-&gt;8)-N-acetyl-alpha-neuraminyl-(2-&gt;3)-beta-D-galactosyl derivative + CMP + H(+). The enzyme catalyses a ganglioside GM3 (d18:1(4E)) + CMP-N-acetyl-beta-neuraminate = a ganglioside GD3 (d18:1(4E)) + CMP + H(+). The catalysed reaction is a ganglioside GD3 (d18:1(4E)) + CMP-N-acetyl-beta-neuraminate = a ganglioside GT3 (d18:1(4E)) + CMP + H(+). It carries out the reaction a ganglioside GD1a (d18:1(4E)) + CMP-N-acetyl-beta-neuraminate = a ganglioside GT1a (d18:1(4E)) + CMP + H(+). It catalyses the reaction a ganglioside GT1b (d18:1(4E)) + CMP-N-acetyl-beta-neuraminate = a ganglioside GQ1b (d18:1(4E)) + CMP + H(+). The enzyme catalyses a ganglioside GM1b (d18:1(4E)) + CMP-N-acetyl-beta-neuraminate = a ganglioside GD1c (d18:1(4E)) + CMP + H(+). The catalysed reaction is a ganglioside GD3 + CMP-N-acetyl-beta-neuraminate = a ganglioside GT3 + CMP + H(+). It carries out the reaction [alpha-N-acetylneuraminyl-(2-&gt;8)](n)-alpha-N-acetylneuraminyl-(2-&gt;8)-alpha-N-acetylneuraminyl-(2-&gt;3)-beta-D-galactosyl-(1-&gt;4)-beta-D-glucosyl-(1&lt;-&gt;1)-ceramide + CMP-N-acetyl-beta-neuraminate = [alpha-N-acetylneuraminyl-(2-&gt;8)](n+1)-alpha-N-acetylneuraminyl-(2-&gt;8)-alpha-N-acetylneuraminyl-(2-&gt;3)-beta-D-galactosyl-(1-&gt;4)-beta-D-glucosyl-(1&lt;-&gt;1)-ceramide + CMP + H(+). It functions in the pathway protein modification; protein glycosylation. The protein operates within lipid metabolism; sphingolipid metabolism. Catalyzes the addition of sialic acid in alpha 2,8-linkage to the sialic acid moiety of the ganglioside GM3 to form ganglioside GD3; gangliosides are a subfamily of complex glycosphingolipds that contain one or more residues of sialic acid. Can catalyze the addition of a second alpha-2,8- sialic acid to GD3 to form GT3. Can use GM1b, GD1a and GT1b as acceptor substrates to synthesize GD1c, GT1a and GQ1b respectively. The polypeptide is Alpha-N-acetylneuraminide alpha-2,8-sialyltransferase (Bos taurus (Bovine)).